The chain runs to 75 residues: Large ribosomal subunit protein bL31 (75 aa).

It belongs to the bacterial ribosomal protein bL31 family. Type A subfamily. As to quaternary structure, part of the 50S ribosomal subunit.

In terms of biological role, binds the 23S rRNA. In Zymomonas mobilis subsp. mobilis (strain ATCC 31821 / ZM4 / CP4), this protein is Large ribosomal subunit protein bL31.